The following is a 156-amino-acid chain: Small ribosomal subunit protein uS7 (156 aa).

This sequence belongs to the universal ribosomal protein uS7 family. In terms of assembly, part of the 30S ribosomal subunit. Contacts proteins S9 and S11.

One of the primary rRNA binding proteins, it binds directly to 16S rRNA where it nucleates assembly of the head domain of the 30S subunit. Is located at the subunit interface close to the decoding center, probably blocks exit of the E-site tRNA. The chain is Small ribosomal subunit protein uS7 from Ralstonia nicotianae (strain ATCC BAA-1114 / GMI1000) (Ralstonia solanacearum).